Consider the following 82-residue polypeptide: Antimicrobial peptide Smp43 (82 aa).

The first 22 residues, 1 to 22 (MNRKLLLVTLMVTMLVMQPAEA), serve as a signal peptide directing secretion. The propeptide occupies 66 to 82 (EAGQMPFDEFMDILYES).

It belongs to the non-disulfide-bridged peptide (NDBP) superfamily. Long chain multifunctional peptide (group 2) family. As to expression, expressed by the venom gland.

Its subcellular location is the secreted. The protein localises to the target cell membrane. In terms of biological role, antimicrobial peptide with moderate activity against Gram-positive bacteria and Gram-negative bacteria, as well as low activity against fungi. Acts by inducing bacterial membrane disruption. Shows activity against B.subtilis (MIC=4 ug/ml), S.epidermidis (MIC=64 ug/ml), S.aureus (MIC=32 ug/ml), E.coli (MIC=128 ug/ml), K.pneumoniae (MIC=64 ug/ml), P.aeruginosa (MIC=64 ug/ml), and C.albicans (MIC=128 ug/ml). Does not show hemolysis activity. This Scorpio palmatus (Israeli golden scorpion) protein is Antimicrobial peptide Smp43.